The chain runs to 165 residues: Cytochrome c-type biogenesis protein CcmE (165 aa).

Over 1 to 7 (MTRKQKR) the chain is Cytoplasmic. Residues 8 to 28 (LAIIGGGMSFIVAAVLLVMFA) traverse the membrane as a helical; Signal-anchor for type II membrane protein segment. The Periplasmic segment spans residues 29-165 (FGQSIAYFYM…ASGDKTGATK (137 aa)). Residues histidine 123 and tyrosine 127 each contribute to the heme site. Positions 138 to 165 (DKGLWQQGAEGAAPAASAASGDKTGATK) are disordered. Positions 145-158 (GAEGAAPAASAASG) are enriched in low complexity.

It belongs to the CcmE/CycJ family.

Its subcellular location is the cell inner membrane. Functionally, heme chaperone required for the biogenesis of c-type cytochromes. Transiently binds heme delivered by CcmC and transfers the heme to apo-cytochromes in a process facilitated by CcmF and CcmH. The sequence is that of Cytochrome c-type biogenesis protein CcmE from Agrobacterium fabrum (strain C58 / ATCC 33970) (Agrobacterium tumefaciens (strain C58)).